The sequence spans 527 residues: RUS family member 1 (527 aa).

An N-linked (GlcNAc...) asparagine glycan is attached at Asn21. A helical transmembrane segment spans residues 220–240 (SQETAVNLVGMLLSVIVSSFI). The N-linked (GlcNAc...) asparagine glycan is linked to Asn243. Residues 245-265 (SLIVTWLVFLFFTSLHLFCNY) traverse the membrane as a helical segment. Asn346 is a glycosylation site (N-linked (GlcNAc...) asparagine). The tract at residues 350–426 (TKNVNNNNNN…NNNNNNNNNK (77 aa)) is disordered. Residues Asn467 and Asn497 are each glycosylated (N-linked (GlcNAc...) asparagine).

It belongs to the RUS1 family.

Its subcellular location is the membrane. This is RUS family member 1 (rusf1) from Dictyostelium discoideum (Social amoeba).